A 122-amino-acid chain; its full sequence is Small ribosomal subunit protein uS12 (122 aa).

The interval 1 to 24 is disordered; it reads MPTINQLIRKKRKSTGKKRTAPAL. The segment covering 8 to 20 has biased composition (basic residues); that stretch reads IRKKRKSTGKKRT. A 3-methylthioaspartic acid modification is found at Asp89.

The protein belongs to the universal ribosomal protein uS12 family. In terms of assembly, part of the 30S ribosomal subunit. Contacts proteins S8 and S17. May interact with IF1 in the 30S initiation complex.

In terms of biological role, with S4 and S5 plays an important role in translational accuracy. Its function is as follows. Interacts with and stabilizes bases of the 16S rRNA that are involved in tRNA selection in the A site and with the mRNA backbone. Located at the interface of the 30S and 50S subunits, it traverses the body of the 30S subunit contacting proteins on the other side and probably holding the rRNA structure together. The combined cluster of proteins S8, S12 and S17 appears to hold together the shoulder and platform of the 30S subunit. This is Small ribosomal subunit protein uS12 from Natranaerobius thermophilus (strain ATCC BAA-1301 / DSM 18059 / JW/NM-WN-LF).